The sequence spans 184 residues: Protein PPLZ12 (184 aa).

The chain is Protein PPLZ12 (PPLZ12) from Lupinus polyphyllus (Large-leaved lupine).